Reading from the N-terminus, the 167-residue chain is ATP synthase subunit b (167 aa).

The chain crosses the membrane as a helical span at residues 10–30 (TFFFQLANTLIMFLILKHFLF).

It belongs to the ATPase B chain family. As to quaternary structure, F-type ATPases have 2 components, F(1) - the catalytic core - and F(0) - the membrane proton channel. F(1) has five subunits: alpha(3), beta(3), gamma(1), delta(1), epsilon(1). F(0) has three main subunits: a(1), b(2) and c(10-14). The alpha and beta chains form an alternating ring which encloses part of the gamma chain. F(1) is attached to F(0) by a central stalk formed by the gamma and epsilon chains, while a peripheral stalk is formed by the delta and b chains.

It localises to the cell membrane. Its function is as follows. F(1)F(0) ATP synthase produces ATP from ADP in the presence of a proton or sodium gradient. F-type ATPases consist of two structural domains, F(1) containing the extramembraneous catalytic core and F(0) containing the membrane proton channel, linked together by a central stalk and a peripheral stalk. During catalysis, ATP synthesis in the catalytic domain of F(1) is coupled via a rotary mechanism of the central stalk subunits to proton translocation. Component of the F(0) channel, it forms part of the peripheral stalk, linking F(1) to F(0). The chain is ATP synthase subunit b from Alkaliphilus oremlandii (strain OhILAs) (Clostridium oremlandii (strain OhILAs)).